Consider the following 204-residue polypeptide: GTP cyclohydrolase 1 (204 aa).

Zn(2+) contacts are provided by Cys-92, His-95, and Cys-165.

This sequence belongs to the GTP cyclohydrolase I family. Homomer.

It carries out the reaction GTP + H2O = 7,8-dihydroneopterin 3'-triphosphate + formate + H(+). It functions in the pathway cofactor biosynthesis; 7,8-dihydroneopterin triphosphate biosynthesis; 7,8-dihydroneopterin triphosphate from GTP: step 1/1. This chain is GTP cyclohydrolase 1, found in Mycolicibacterium paratuberculosis (strain ATCC BAA-968 / K-10) (Mycobacterium paratuberculosis).